The sequence spans 377 residues: Chaperone protein DnaJ (377 aa).

A J domain is found at Asp4–Gly69. The CR-type zinc-finger motif lies at Gly135 to Glu213. Cys148, Cys151, Cys165, Cys168, Cys187, Cys190, Cys201, and Cys204 together coordinate Zn(2+). CXXCXGXG motif repeat units follow at residues Cys148–Gly155, Cys165–Gly172, Cys187–Gly194, and Cys201–Gly208.

Belongs to the DnaJ family. In terms of assembly, homodimer. The cofactor is Zn(2+).

Its subcellular location is the cytoplasm. Functionally, participates actively in the response to hyperosmotic and heat shock by preventing the aggregation of stress-denatured proteins and by disaggregating proteins, also in an autonomous, DnaK-independent fashion. Unfolded proteins bind initially to DnaJ; upon interaction with the DnaJ-bound protein, DnaK hydrolyzes its bound ATP, resulting in the formation of a stable complex. GrpE releases ADP from DnaK; ATP binding to DnaK triggers the release of the substrate protein, thus completing the reaction cycle. Several rounds of ATP-dependent interactions between DnaJ, DnaK and GrpE are required for fully efficient folding. Also involved, together with DnaK and GrpE, in the DNA replication of plasmids through activation of initiation proteins. The sequence is that of Chaperone protein DnaJ from Brucella abortus (strain S19).